A 128-amino-acid chain; its full sequence is Large ribosomal subunit protein bL17 (128 aa).

This sequence belongs to the bacterial ribosomal protein bL17 family. Part of the 50S ribosomal subunit. Contacts protein L32.

This Klebsiella pneumoniae (strain 342) protein is Large ribosomal subunit protein bL17.